Reading from the N-terminus, the 587-residue chain is Serine/threonine-protein phosphatase 2A 65 kDa regulatory subunit A beta isoform (587 aa).

An N-acetylserine modification is found at serine 2. HEAT repeat units follow at residues 2 to 42 (SMID…ALGE), 44 to 80 (RTRK…YVGG), 81 to 119 (VEYA…QMRE), 158 to 196 (DMLK…TVES), 197 to 235 (AHLK…LLEP), 236 to 274 (QDCV…AVGP), 275 to 313 (EPTR…ILNP), 315 to 352 (IAIQ…VLGK), 353 to 391 (DATI…VIGI), 393 to 430 (LLSQ…QLGV), 432 to 469 (FFDD…EFGP), 470 to 508 (EWAM…VMGS), 509 to 547 (EITC…IVDQ), and 549 to 586 (VVEK…VMMS).

The protein belongs to the phosphatase 2A regulatory subunit A family. As to quaternary structure, PP2A consists of a common heterodimeric core enzyme, composed of a 36 kDa catalytic subunit (subunit C) and a 65 kDa constant regulatory subunit (subunit A), that associates with a variety of regulatory subunits such as subunits B (the R2/B/PR55/B55, R3/B''/PR72/PR130/PR59 and R5/B'/B56 families). Interacts with B'THETA. Interacts with SRK2E/OST1. Interacts with SIC/RON3. In terms of tissue distribution, ubiquitous, with higher levels in roots and flowers (at protein level).

It localises to the cytoplasm. It is found in the cytosol. Its subcellular location is the nucleus. The protein localises to the peroxisome. The A subunit of protein phosphatase 2A serves as a scaffolding molecule to coordinate the assembly of the catalytic subunit and a variable regulatory B subunit. Involved during developmental process such as seedling and floral developments. Seems to act as a negative regulator of PP2A catalytic activity. Associates with the serine/threonine-protein phosphatase PP2A catalytic subunit C and regulatory subunit B' to positively regulates beta-oxidation of fatty acids and protoauxins in peroxisomes by dephosphorylating peroxisomal beta-oxidation-related proteins. The chain is Serine/threonine-protein phosphatase 2A 65 kDa regulatory subunit A beta isoform (PP2AA2) from Arabidopsis thaliana (Mouse-ear cress).